Reading from the N-terminus, the 261-residue chain is Type III pantothenate kinase (261 aa).

6–13 (DVGNTNAK) lines the ATP pocket. Position 108 to 111 (108 to 111 (GADR)) interacts with substrate. The Proton acceptor role is filled by aspartate 110. Residue threonine 134 participates in ATP binding. Threonine 188 provides a ligand contact to substrate.

This sequence belongs to the type III pantothenate kinase family. In terms of assembly, homodimer. The cofactor is NH4(+). Requires K(+) as cofactor.

The protein localises to the cytoplasm. The catalysed reaction is (R)-pantothenate + ATP = (R)-4'-phosphopantothenate + ADP + H(+). The protein operates within cofactor biosynthesis; coenzyme A biosynthesis; CoA from (R)-pantothenate: step 1/5. In terms of biological role, catalyzes the phosphorylation of pantothenate (Pan), the first step in CoA biosynthesis. The chain is Type III pantothenate kinase from Sphingopyxis alaskensis (strain DSM 13593 / LMG 18877 / RB2256) (Sphingomonas alaskensis).